Consider the following 122-residue polypeptide: MVQIQTYLTVADNTGGKIAQCIKVLGGSKKRYARVGDIIVVAVKQAIPNSPVKKGDVHKAVVVRTSKEIRRKNGTYVRFDDNACVILDANLNPRGKRVFGPVARELRDANFMKVVSLASEVI.

This sequence belongs to the universal ribosomal protein uL14 family. As to quaternary structure, part of the 50S ribosomal subunit. Forms a cluster with proteins L3 and L19. In the 70S ribosome, L14 and L19 interact and together make contacts with the 16S rRNA in bridges B5 and B8.

Its function is as follows. Binds to 23S rRNA. Forms part of two intersubunit bridges in the 70S ribosome. The polypeptide is Large ribosomal subunit protein uL14 (Borrelia hermsii (strain HS1 / DAH)).